Here is a 398-residue protein sequence, read N- to C-terminus: Bifunctional enzyme IspD/IspF (398 aa).

A 2-C-methyl-D-erythritol 4-phosphate cytidylyltransferase region spans residues 1–234; the sequence is MSNSKRTAAI…SRLGALLGDI (234 aa). A 2-C-methyl-D-erythritol 2,4-cyclodiphosphate synthase region spans residues 235–398; that stretch reads RTGTGYDVHA…LPWGTNGLAD (164 aa). Residues Asp241 and His243 each coordinate a divalent metal cation. Residues 241 to 243 and 267 to 268 each bind 4-CDP-2-C-methyl-D-erythritol 2-phosphate; these read DVH and HS. An a divalent metal cation-binding site is contributed by His275. Residues 289–291, 365–368, Phe372, and Arg375 contribute to the 4-CDP-2-C-methyl-D-erythritol 2-phosphate site; these read DIG and TTSE.

This sequence in the N-terminal section; belongs to the IspD/TarI cytidylyltransferase family. IspD subfamily. In the C-terminal section; belongs to the IspF family. The cofactor is a divalent metal cation.

The enzyme catalyses 2-C-methyl-D-erythritol 4-phosphate + CTP + H(+) = 4-CDP-2-C-methyl-D-erythritol + diphosphate. It catalyses the reaction 4-CDP-2-C-methyl-D-erythritol 2-phosphate = 2-C-methyl-D-erythritol 2,4-cyclic diphosphate + CMP. Its pathway is isoprenoid biosynthesis; isopentenyl diphosphate biosynthesis via DXP pathway; isopentenyl diphosphate from 1-deoxy-D-xylulose 5-phosphate: step 2/6. It participates in isoprenoid biosynthesis; isopentenyl diphosphate biosynthesis via DXP pathway; isopentenyl diphosphate from 1-deoxy-D-xylulose 5-phosphate: step 4/6. In terms of biological role, bifunctional enzyme that catalyzes the formation of 4-diphosphocytidyl-2-C-methyl-D-erythritol from CTP and 2-C-methyl-D-erythritol 4-phosphate (MEP) (IspD), and catalyzes the conversion of 4-diphosphocytidyl-2-C-methyl-D-erythritol 2-phosphate (CDP-ME2P) to 2-C-methyl-D-erythritol 2,4-cyclodiphosphate (ME-CPP) with a corresponding release of cytidine 5-monophosphate (CMP) (IspF). This is Bifunctional enzyme IspD/IspF from Rhodopseudomonas palustris (strain BisB18).